Reading from the N-terminus, the 319-residue chain is Probable metallo-hydrolase YqjP (319 aa).

Residues His67, His69, Asp71, His72, His165, Asp184, and His231 each coordinate Zn(2+).

This sequence belongs to the metallo-beta-lactamase superfamily. Requires Zn(2+) as cofactor.

The sequence is that of Probable metallo-hydrolase YqjP (yqjP) from Bacillus subtilis (strain 168).